Reading from the N-terminus, the 138-residue chain is Drosulfakinins (138 aa).

An N-terminal signal peptide occupies residues 1–33; sequence MGLRSCTHFATLVMPLWALAFCFLVLVPVPAQT. Residues 34-73 constitute a propeptide that is removed on maturation; sequence TSLQISKGDRRLQDLESNMGAESDQPNANLVGTSLSRFGD. Residue Phe-82 is modified to Phenylalanine amide. Positions 86–108 are excised as a propeptide; sequence VPRPIIPIELDLLMDNDDENTKA. A Sulfotyrosine modification is found at Tyr-114. Residue Phe-119 is modified to Phenylalanine amide. Tyr-131 carries the post-translational modification Sulfotyrosine. Phe-136 carries the phenylalanine amide modification.

It belongs to the gastrin/cholecystokinin family.

It is found in the secreted. Functionally, drosulfakinin-0 (DSK 0) plays diverse biological roles including regulating gut muscle contraction in adults but not in larvae. This is Drosulfakinins from Drosophila teissieri (Fruit fly).